We begin with the raw amino-acid sequence, 227 residues long: Heptaprenylglyceryl phosphate synthase (227 aa).

Lysine 13 lines the sn-glycerol 1-phosphate pocket. The Mg(2+) site is built by aspartate 15 and threonine 41. Residues 159–164 (YLEYSG), glycine 189, and 209–210 (GN) contribute to the sn-glycerol 1-phosphate site.

The protein belongs to the GGGP/HepGP synthase family. Group I subfamily. In terms of assembly, homodimer. The cofactor is Mg(2+).

The enzyme catalyses sn-glycerol 1-phosphate + all-trans-heptaprenyl diphosphate = 3-heptaprenyl-sn-glycero-1-phosphate + diphosphate. It participates in membrane lipid metabolism; glycerophospholipid metabolism. Its function is as follows. Prenyltransferase that catalyzes in vivo the transfer of the heptaprenyl moiety of heptaprenyl pyrophosphate (HepPP; 35 carbon atoms) to the C3 hydroxyl of sn-glycerol-1-phosphate (G1P), producing heptaprenylglyceryl phosphate (HepGP). This reaction is an ether-bond-formation step in the biosynthesis of archaea-type G1P-based membrane lipids found in Bacillales. This is Heptaprenylglyceryl phosphate synthase from Exiguobacterium sibiricum (strain DSM 17290 / CCUG 55495 / CIP 109462 / JCM 13490 / 255-15).